A 55-amino-acid polypeptide reads, in one-letter code: Conotoxin Cal14.14 (55 aa).

An N-terminal signal peptide occupies residues 1-20 (MFRLGVFLLTFLLLVSMATS). Disulfide bonds link C34-C48 and C38-C52.

In terms of tissue distribution, expressed by the venom duct.

The protein localises to the secreted. Functionally, probable neurotoxin. The sequence is that of Conotoxin Cal14.14 from Californiconus californicus (California cone).